We begin with the raw amino-acid sequence, 222 residues long: Germin-like protein subfamily 1 member 4 (222 aa).

An N-terminal signal peptide occupies residues 1–24 (MEGLLQFLLAKIILLALASSFVYC). Cysteines 34 and 50 form a disulfide. N-linked (GlcNAc...) asparagine glycosylation occurs at N38. Positions 64–215 (SGLNVPGNTI…AFALDYNKVK (152 aa)) constitute a Cupin type-1 domain. Mn(2+) contacts are provided by H112 and H114. N-linked (GlcNAc...) asparagine glycosylation occurs at N139. Residue H161 coordinates Mn(2+).

The protein belongs to the germin family. Oligomer (believed to be a pentamer but probably hexamer).

The protein resides in the secreted. It is found in the extracellular space. It localises to the apoplast. Functionally, may play a role in plant defense. Probably has no oxalate oxidase activity even if the active site is conserved. The sequence is that of Germin-like protein subfamily 1 member 4 from Arabidopsis thaliana (Mouse-ear cress).